An 814-amino-acid chain; its full sequence is Lon protease (814 aa).

Positions 1 to 20 (MANEAHNIEHTDPEFRDDSA) are disordered. A Lon N-terminal domain is found at 25–219 (LPLLPVRDTV…KINQHLAKEL (195 aa)). An ATP-binding site is contributed by 372 to 379 (GPPGVGKT). The Lon proteolytic domain maps to 610–792 (TKRAGVVVGL…DEVLEIALPS (183 aa)). Residues Ser-697 and Lys-740 contribute to the active site.

This sequence belongs to the peptidase S16 family. Homohexamer. Organized in a ring with a central cavity.

It localises to the cytoplasm. It carries out the reaction Hydrolysis of proteins in presence of ATP.. In terms of biological role, ATP-dependent serine protease that mediates the selective degradation of mutant and abnormal proteins as well as certain short-lived regulatory proteins. Required for cellular homeostasis and for survival from DNA damage and developmental changes induced by stress. Degrades polypeptides processively to yield small peptide fragments that are 5 to 10 amino acids long. Binds to DNA in a double-stranded, site-specific manner. This chain is Lon protease, found in Koribacter versatilis (strain Ellin345).